Reading from the N-terminus, the 446-residue chain is Sensor-type histidine kinase PrrB (446 aa).

The next 2 membrane-spanning stretches (helical) occupy residues 19-39 and 151-171; these read VVATAIGAAIPVLIVGTVVWV and LLICGFAIAAAAVFAWLLAAF. Positions 172–222 constitute an HAMP domain; it reads AVRPFKQLAQQTRSVDAGGEAPRVEVHGATEAVEIAEAMRGMLQRIWNEQN. The 210-residue stretch at 237 to 446 folds into the Histidine kinase domain; it reads VSSHELRTPL…RLLLRISAPS (210 aa). The residue at position 240 (His-240) is a Phosphohistidine; by autocatalysis.

Autophosphorylated.

The protein resides in the cell membrane. The enzyme catalyses ATP + protein L-histidine = ADP + protein N-phospho-L-histidine.. Functionally, member of the two-component regulatory system PrrB/PrrA that is involved specifically in early intracellular multiplication of Mycobacterium and is essential for its viability. Functions as a sensor protein kinase which is autophosphorylated at a histidine residue and transfers its phosphate group to the conserved aspartic acid residue in the regulatory domain of PrrA. In turn, PrrA binds to the upstream promoter regions of target genes including itself to positively regulate their expression. The protein is Sensor-type histidine kinase PrrB (prrB) of Mycobacterium leprae (strain TN).